A 111-amino-acid chain; its full sequence is Probable 4-amino-4-deoxy-L-arabinose-phosphoundecaprenol flippase subunit ArnE (111 aa).

3 consecutive transmembrane segments (helical) span residues 38–58 (LWLG…LLVL), 61–81 (LPVG…TLAA), and 91–111 (PRHW…GSAA). An EamA domain is found at 40–109 (LGLALICMGA…IISGIIILGS (70 aa)).

It belongs to the ArnE family. Heterodimer of ArnE and ArnF.

The protein localises to the cell inner membrane. It functions in the pathway bacterial outer membrane biogenesis; lipopolysaccharide biosynthesis. Translocates 4-amino-4-deoxy-L-arabinose-phosphoundecaprenol (alpha-L-Ara4N-phosphoundecaprenol) from the cytoplasmic to the periplasmic side of the inner membrane. The chain is Probable 4-amino-4-deoxy-L-arabinose-phosphoundecaprenol flippase subunit ArnE from Salmonella heidelberg (strain SL476).